Here is a 335-residue protein sequence, read N- to C-terminus: Phospho-N-acetylmuramoyl-pentapeptide-transferase (335 aa).

10 helical membrane passes run 3-23 (LTIL…PHFI), 53-73 (GGTV…LVYF), 78-98 (SLGL…IGFL), 118-138 (FTFQ…PSGI), 143-163 (VFGY…FWVV), 174-194 (GIDG…GVIA), 200-220 (FDVL…FLFN), 226-246 (IFMG…ISIA), 251-271 (WTLL…MLQV), and 314-334 (VDAF…AILY).

This sequence belongs to the glycosyltransferase 4 family. MraY subfamily. Requires Mg(2+) as cofactor.

The protein resides in the cell membrane. It carries out the reaction UDP-N-acetyl-alpha-D-muramoyl-L-alanyl-gamma-D-glutamyl-L-lysyl-D-alanyl-D-alanine + di-trans,octa-cis-undecaprenyl phosphate = Mur2Ac(oyl-L-Ala-gamma-D-Glu-L-Lys-D-Ala-D-Ala)-di-trans,octa-cis-undecaprenyl diphosphate + UMP. It participates in cell wall biogenesis; peptidoglycan biosynthesis. In terms of biological role, catalyzes the initial step of the lipid cycle reactions in the biosynthesis of the cell wall peptidoglycan: transfers peptidoglycan precursor phospho-MurNAc-pentapeptide from UDP-MurNAc-pentapeptide onto the lipid carrier undecaprenyl phosphate, yielding undecaprenyl-pyrophosphoryl-MurNAc-pentapeptide, known as lipid I. This is Phospho-N-acetylmuramoyl-pentapeptide-transferase from Streptococcus equi subsp. equi (strain 4047).